A 236-amino-acid polypeptide reads, in one-letter code: Endonuclease V (236 aa).

Mg(2+)-binding residues include Asp-47 and Asp-115.

Belongs to the endonuclease V family. Requires Mg(2+) as cofactor.

The protein localises to the cytoplasm. It catalyses the reaction Endonucleolytic cleavage at apurinic or apyrimidinic sites to products with a 5'-phosphate.. Functionally, DNA repair enzyme involved in the repair of deaminated bases. Selectively cleaves double-stranded DNA at the second phosphodiester bond 3' to a deoxyinosine leaving behind the intact lesion on the nicked DNA. The chain is Endonuclease V from Xanthomonas campestris pv. campestris (strain B100).